A 197-amino-acid polypeptide reads, in one-letter code: ATP-dependent Clp protease proteolytic subunit 1 (197 aa).

The active site involves histidine 126.

Belongs to the peptidase S14 family. In terms of assembly, fourteen ClpP subunits assemble into 2 heptameric rings which stack back to back to give a disk-like structure with a central cavity, resembling the structure of eukaryotic proteasomes.

The protein resides in the cytoplasm. It carries out the reaction Hydrolysis of proteins to small peptides in the presence of ATP and magnesium. alpha-casein is the usual test substrate. In the absence of ATP, only oligopeptides shorter than five residues are hydrolyzed (such as succinyl-Leu-Tyr-|-NHMec, and Leu-Tyr-Leu-|-Tyr-Trp, in which cleavage of the -Tyr-|-Leu- and -Tyr-|-Trp bonds also occurs).. Its function is as follows. Cleaves peptides in various proteins in a process that requires ATP hydrolysis. Has a chymotrypsin-like activity. Plays a major role in the degradation of misfolded proteins. This chain is ATP-dependent Clp protease proteolytic subunit 1, found in Nocardia farcinica (strain IFM 10152).